A 294-amino-acid chain; its full sequence is Cytidine deaminase (294 aa).

CMP/dCMP-type deaminase domains follow at residues 48 to 168 and 186 to 294; these read DEDA…FGPK and LTGN…VLLG. 89–91 lines the substrate pocket; it reads NME. H102 lines the Zn(2+) pocket. E104 serves as the catalytic Proton donor. Zn(2+) is bound by residues C129 and C132.

This sequence belongs to the cytidine and deoxycytidylate deaminase family. Homodimer. Zn(2+) serves as cofactor.

The catalysed reaction is cytidine + H2O + H(+) = uridine + NH4(+). It carries out the reaction 2'-deoxycytidine + H2O + H(+) = 2'-deoxyuridine + NH4(+). Its function is as follows. This enzyme scavenges exogenous and endogenous cytidine and 2'-deoxycytidine for UMP synthesis. The polypeptide is Cytidine deaminase (Salmonella typhi).